A 143-amino-acid chain; its full sequence is Large ribosomal subunit protein uL11 (143 aa).

This sequence belongs to the universal ribosomal protein uL11 family. As to quaternary structure, part of the ribosomal stalk of the 50S ribosomal subunit. Interacts with L10 and the large rRNA to form the base of the stalk. L10 forms an elongated spine to which L12 dimers bind in a sequential fashion forming a multimeric L10(L12)X complex. One or more lysine residues are methylated.

Forms part of the ribosomal stalk which helps the ribosome interact with GTP-bound translation factors. The sequence is that of Large ribosomal subunit protein uL11 from Teredinibacter turnerae (strain ATCC 39867 / T7901).